The primary structure comprises 138 residues: Thyrotropin subunit beta (138 aa).

A signal peptide spans 1-20 (MTATFLMSLLFGLAFGQTMS). Disulfide bonds link Cys22-Cys72, Cys36-Cys87, Cys39-Cys125, Cys47-Cys103, Cys51-Cys105, and Cys108-Cys115. Asn43 carries N-linked (GlcNAc...) asparagine glycosylation. The propeptide occupies 133–138 (LVGFPV).

Belongs to the glycoprotein hormones subunit beta family. Heterodimer of a common alpha chain and a unique beta chain which confers biological specificity to thyrotropin, lutropin, follitropin and gonadotropin.

The protein localises to the secreted. Its function is as follows. Indispensable for the control of thyroid structure and metabolism. The chain is Thyrotropin subunit beta (TSHB) from Monodelphis domestica (Gray short-tailed opossum).